Here is a 502-residue protein sequence, read N- to C-terminus: Probable glycine dehydrogenase (decarboxylating) subunit 2 (502 aa).

Lys273 bears the N6-(pyridoxal phosphate)lysine mark.

This sequence belongs to the GcvP family. C-terminal subunit subfamily. As to quaternary structure, the glycine cleavage system is composed of four proteins: P, T, L and H. In this organism, the P 'protein' is a heterodimer of two subunits. The cofactor is pyridoxal 5'-phosphate.

It carries out the reaction N(6)-[(R)-lipoyl]-L-lysyl-[glycine-cleavage complex H protein] + glycine + H(+) = N(6)-[(R)-S(8)-aminomethyldihydrolipoyl]-L-lysyl-[glycine-cleavage complex H protein] + CO2. The glycine cleavage system catalyzes the degradation of glycine. The P protein binds the alpha-amino group of glycine through its pyridoxal phosphate cofactor; CO(2) is released and the remaining methylamine moiety is then transferred to the lipoamide cofactor of the H protein. The chain is Probable glycine dehydrogenase (decarboxylating) subunit 2 from Pyrococcus abyssi (strain GE5 / Orsay).